The primary structure comprises 67 residues: DNA-directed RNA polymerase subunit omega (67 aa).

It belongs to the RNA polymerase subunit omega family. In terms of assembly, the RNAP catalytic core consists of 2 alpha, 1 beta, 1 beta' and 1 omega subunit. When a sigma factor is associated with the core the holoenzyme is formed, which can initiate transcription.

It carries out the reaction RNA(n) + a ribonucleoside 5'-triphosphate = RNA(n+1) + diphosphate. In terms of biological role, promotes RNA polymerase assembly. Latches the N- and C-terminal regions of the beta' subunit thereby facilitating its interaction with the beta and alpha subunits. In Paraburkholderia phymatum (strain DSM 17167 / CIP 108236 / LMG 21445 / STM815) (Burkholderia phymatum), this protein is DNA-directed RNA polymerase subunit omega.